We begin with the raw amino-acid sequence, 116 residues long: Large ribosomal subunit protein bL19 (116 aa).

This sequence belongs to the bacterial ribosomal protein bL19 family.

Functionally, this protein is located at the 30S-50S ribosomal subunit interface and may play a role in the structure and function of the aminoacyl-tRNA binding site. The sequence is that of Large ribosomal subunit protein bL19 from Staphylococcus haemolyticus (strain JCSC1435).